The following is a 318-amino-acid chain: D-alanine--D-alanine ligase (318 aa).

The region spanning 117–315 (KQVWLSLGLS…FETLVWRVLE (199 aa)) is the ATP-grasp domain. An ATP-binding site is contributed by 146–201 (ARQIGLPIIVKPANEGSSVGVSRVFDQAQLEEAVTLAARYDGALLMEQLIEGDELT). The Mg(2+) site is built by D268, E282, and N284.

The protein belongs to the D-alanine--D-alanine ligase family. Mg(2+) is required as a cofactor. The cofactor is Mn(2+).

It is found in the cytoplasm. The catalysed reaction is 2 D-alanine + ATP = D-alanyl-D-alanine + ADP + phosphate + H(+). The protein operates within cell wall biogenesis; peptidoglycan biosynthesis. Functionally, cell wall formation. The sequence is that of D-alanine--D-alanine ligase from Xanthomonas axonopodis pv. citri (strain 306).